A 170-amino-acid chain; its full sequence is Bifunctional protein PyrR (170 aa).

The short motif at 90–102 is the PRPP-binding element; the sequence is LVLIDDVLMSGRT.

It belongs to the purine/pyrimidine phosphoribosyltransferase family. PyrR subfamily.

The enzyme catalyses UMP + diphosphate = 5-phospho-alpha-D-ribose 1-diphosphate + uracil. Its function is as follows. Regulates the transcription of the pyrimidine nucleotide (pyr) operon in response to exogenous pyrimidines. In terms of biological role, also displays a weak uracil phosphoribosyltransferase activity which is not physiologically significant. This Pseudomonas syringae pv. tomato (strain ATCC BAA-871 / DC3000) protein is Bifunctional protein PyrR.